Reading from the N-terminus, the 179-residue chain is Large ribosomal subunit protein uL10 (179 aa).

The protein belongs to the universal ribosomal protein uL10 family. In terms of assembly, part of the ribosomal stalk of the 50S ribosomal subunit. The N-terminus interacts with L11 and the large rRNA to form the base of the stalk. The C-terminus forms an elongated spine to which L12 dimers bind in a sequential fashion forming a multimeric L10(L12)X complex.

Functionally, forms part of the ribosomal stalk, playing a central role in the interaction of the ribosome with GTP-bound translation factors. The chain is Large ribosomal subunit protein uL10 from Thermomicrobium roseum (strain ATCC 27502 / DSM 5159 / P-2).